Reading from the N-terminus, the 260-residue chain is Indole-3-glycerol phosphate synthase (260 aa).

Belongs to the TrpC family.

The enzyme catalyses 1-(2-carboxyphenylamino)-1-deoxy-D-ribulose 5-phosphate + H(+) = (1S,2R)-1-C-(indol-3-yl)glycerol 3-phosphate + CO2 + H2O. The protein operates within amino-acid biosynthesis; L-tryptophan biosynthesis; L-tryptophan from chorismate: step 4/5. The chain is Indole-3-glycerol phosphate synthase from Neisseria gonorrhoeae (strain ATCC 700825 / FA 1090).